The following is a 278-amino-acid chain: Thiazole synthase (278 aa).

The active-site Schiff-base intermediate with DXP is Lys109. 1-deoxy-D-xylulose 5-phosphate-binding positions include Gly170, Ala197–Gly198, and Asn219–Thr220.

It belongs to the ThiG family. As to quaternary structure, homotetramer. Forms heterodimers with either ThiH or ThiS.

The protein localises to the cytoplasm. The enzyme catalyses [ThiS sulfur-carrier protein]-C-terminal-Gly-aminoethanethioate + 2-iminoacetate + 1-deoxy-D-xylulose 5-phosphate = [ThiS sulfur-carrier protein]-C-terminal Gly-Gly + 2-[(2R,5Z)-2-carboxy-4-methylthiazol-5(2H)-ylidene]ethyl phosphate + 2 H2O + H(+). The protein operates within cofactor biosynthesis; thiamine diphosphate biosynthesis. Functionally, catalyzes the rearrangement of 1-deoxy-D-xylulose 5-phosphate (DXP) to produce the thiazole phosphate moiety of thiamine. Sulfur is provided by the thiocarboxylate moiety of the carrier protein ThiS. In vitro, sulfur can be provided by H(2)S. This chain is Thiazole synthase, found in Cupriavidus pinatubonensis (strain JMP 134 / LMG 1197) (Cupriavidus necator (strain JMP 134)).